Here is a 678-residue protein sequence, read N- to C-terminus: Methionine--tRNA ligase (678 aa).

The 'HIGH' region motif lies at 12 to 22; the sequence is PYANGPIHLGH. Zn(2+) is bound by residues Cys-143, Cys-146, Cys-156, and Cys-159. The 'KMSKS' region signature appears at 328–332; sequence KMSKS. Lys-331 is a binding site for ATP. Residues 577 to 678 form the tRNA-binding domain; it reads DFSKVDLRIA…SGAQPGMRVK (102 aa).

The protein belongs to the class-I aminoacyl-tRNA synthetase family. MetG type 1 subfamily. Homodimer. The cofactor is Zn(2+).

The protein localises to the cytoplasm. The enzyme catalyses tRNA(Met) + L-methionine + ATP = L-methionyl-tRNA(Met) + AMP + diphosphate. Is required not only for elongation of protein synthesis but also for the initiation of all mRNA translation through initiator tRNA(fMet) aminoacylation. This Acidithiobacillus ferrooxidans (strain ATCC 23270 / DSM 14882 / CIP 104768 / NCIMB 8455) (Ferrobacillus ferrooxidans (strain ATCC 23270)) protein is Methionine--tRNA ligase.